Reading from the N-terminus, the 623-residue chain is ATP-dependent lipid A-core flippase (623 aa).

5 helical membrane passes run Leu-66 to Ile-86, Val-103 to Phe-123, Leu-190 to Ile-210, Leu-290 to Leu-310, and Ala-317 to Ile-337. In terms of domain architecture, ABC transmembrane type-1 spans Val-67–Lys-349. One can recognise an ABC transporter domain in the interval Val-382 to Met-618. ATP is bound at residue Gly-416–Thr-423.

It belongs to the ABC transporter superfamily. Lipid exporter (TC 3.A.1.106) family. Homodimer.

The protein resides in the cell inner membrane. It carries out the reaction ATP + H2O + lipid A-core oligosaccharideSide 1 = ADP + phosphate + lipid A-core oligosaccharideSide 2.. Involved in lipopolysaccharide (LPS) biosynthesis. Translocates lipid A-core from the inner to the outer leaflet of the inner membrane. Transmembrane domains (TMD) form a pore in the inner membrane and the ATP-binding domain (NBD) is responsible for energy generation. In Bordetella bronchiseptica (strain ATCC BAA-588 / NCTC 13252 / RB50) (Alcaligenes bronchisepticus), this protein is ATP-dependent lipid A-core flippase.